Consider the following 318-residue polypeptide: Protein-L-histidine N-pros-methyltransferase (318 aa).

An N-terminal signal peptide occupies residues M1–A18. The N-linked (GlcNAc...) asparagine glycan is linked to N35. Residues E174, N210, and Y295 each coordinate S-adenosyl-L-homocysteine.

This sequence belongs to the METTL9 family. Expressed in liver, colon, small intestine, skin, kidney and to a lesser extent in spleen, lung, thymus and stomach. Not detected in fibroblast and endothelial cells.

It is found in the endoplasmic reticulum. The protein resides in the mitochondrion. The enzyme catalyses L-histidyl-[protein] + S-adenosyl-L-methionine = N(pros)-methyl-L-histidyl-[protein] + S-adenosyl-L-homocysteine + H(+). Protein-histidine N-methyltransferase that specifically catalyzes 1-methylhistidine (pros-methylhistidine) methylation of target proteins. Specifically methylates the second His of proteins with a His-x-His (HxH) motif (where 'x' is preferably a small amino acid), while exploiting the first one as a recognition signature. Catalyzes methylation of target proteins such as S100A9, NDUFB3, SLC39A5, SLC39A7, ARMC6 and DNAJB12; 1-methylhistidine modification may affect the binding of zinc and other metals to its target proteins. Constitutes the main methyltransferase for the 1-methylhistidine modification in cell. This is Protein-L-histidine N-pros-methyltransferase from Mus musculus (Mouse).